The primary structure comprises 212 residues: External core antigen (212 aa).

Positions 1-19 (MQLFHLCLIISCSCPTVQA) are cleaved as a signal peptide. The HBEAG stretch occupies residues 25-27 (GWL). A disordered region spans residues 165–212 (NAPILSTLPETTVVRRRGRSPRRRTPSPRRRRSQSPRRRRSQSRESQC). Positions 178–205 (VRRRGRSPRRRTPSPRRRRSQSPRRRRS) are enriched in basic residues. The stretch at 184-190 (SPRRRTP) is one 1; half-length repeat. The 3 X 8 AA repeats of S-P-R-R-R-R-S-Q stretch occupies residues 184-206 (SPRRRTPSPRRRRSQSPRRRRSQ). A propeptide spanning residues 184-212 (SPRRRTPSPRRRRSQSPRRRRSQSRESQC) is cleaved from the precursor. Repeat copies occupy residues 191-198 (SPRRRRSQ) and 199-206 (SPRRRRSQ).

This sequence belongs to the orthohepadnavirus precore antigen family. Homodimerizes. Phosphorylated. Post-translationally, cleaved by host furin.

The protein localises to the secreted. It localises to the host nucleus. May regulate immune response to the intracellular capsid in acting as a T-cell tolerogen, by having an immunoregulatory effect which prevents destruction of infected cells by cytotoxic T-cells. This immune regulation may predispose to chronicity during perinatal infections and prevent severe liver injury during adult infections. This Hepatitis B virus genotype C subtype ayw (isolate China/Tibet127/2002) (HBV-C) protein is External core antigen.